The following is a 184-amino-acid chain: Ribosome maturation factor RimP (184 aa).

This sequence belongs to the RimP family.

The protein localises to the cytoplasm. Functionally, required for maturation of 30S ribosomal subunits. The sequence is that of Ribosome maturation factor RimP from Zymomonas mobilis subsp. mobilis (strain ATCC 31821 / ZM4 / CP4).